Here is a 101-residue protein sequence, read N- to C-terminus: Small ribosomal subunit protein uS14 (101 aa).

This sequence belongs to the universal ribosomal protein uS14 family. In terms of assembly, part of the 30S ribosomal subunit. Contacts proteins S3 and S10.

Its function is as follows. Binds 16S rRNA, required for the assembly of 30S particles and may also be responsible for determining the conformation of the 16S rRNA at the A site. In Vibrio campbellii (strain ATCC BAA-1116), this protein is Small ribosomal subunit protein uS14.